The primary structure comprises 287 residues: MMEKIRLILLSSRPISWVNTAYPFGLAYLLNAGEIDWLFWLGIVFFLIPYNIAMYGINDVFDYESDIRNPRKGGVEGAVLPKSSHSTLLWASAISTIPFLVILFIFGTWMSSLWLTISVLAVIAYSAPKLRFKERPFIDALTSSTHFTSPALIGATITGTSPSAAMWIALGSFFLWGMASQILGAVQDVNADREANLSSIATVIGARGAIRLSVVLYLLAAVLVTTLPNPAWIIGIAILTYVFDAARFWNITDASCEQANRSWKVFLWLNYFVGAVITILLIAIHQI.

7 consecutive transmembrane segments (helical) span residues 15 to 35, 37 to 57, 97 to 117, 137 to 157, 166 to 186, 218 to 238, and 265 to 285; these read ISWV…AGEI, WLFW…MYGI, IPFL…WLTI, FIDA…GATI, MWIA…LGAV, LLAA…GIAI, and VFLW…IAIH.

The protein belongs to the UbiA prenyltransferase family.

It is found in the cell membrane. The catalysed reaction is all-trans-lycopene + dimethylallyl diphosphate + A + H2O = nonaflavuxanthin + AH2 + diphosphate. It catalyses the reaction nonaflavuxanthin + dimethylallyl diphosphate + A + H2O = flavuxanthin + AH2 + diphosphate. It participates in carotenoid biosynthesis. Its function is as follows. Catalyzes the elongation of the C(40) carotenoid all-trans-lycopene to the acyclic C(50) carotenoid flavuxanthin during decaprenoxanthin biosynthesis. Acts as a bifunctional enzyme that catalyzes the elongation of lycopene by attaching a C(5) isoprene unit at C-2, as well as the hydroxylation of the new isoprene unit. The enzyme acts at both ends of the substrate, forming the C(50) carotenoid flavuxanthin via the C(45) intermediate nonaflavuxanthin. This is Lycopene elongase/hydratase from Corynebacterium glutamicum (Brevibacterium saccharolyticum).